We begin with the raw amino-acid sequence, 86 residues long: Stage V sporulation protein S (86 aa).

Its function is as follows. Interferes with sporulation at an early stage. Seems to play a positive role in allowing cells to progress beyond stage V of sporulation. This Bacillus subtilis (strain 168) protein is Stage V sporulation protein S.